A 749-amino-acid polypeptide reads, in one-letter code: Patatin-like phospholipase domain-containing protein AN0408 (749 aa).

Over residues methionine 1 to aspartate 11 the composition is skewed to basic and acidic residues. The disordered stretch occupies residues methionine 1–tyrosine 21. The chain crosses the membrane as a helical span at residues tryptophan 92–threonine 112. In terms of domain architecture, PNPLA spans leucine 280–asparagine 471. The short motif at glycine 311 to glycine 315 is the GXSXG element. The active-site Nucleophile is serine 313. Aspartate 458 functions as the Proton acceptor in the catalytic mechanism. The segment at serine 630 to phenylalanine 659 is disordered. Residues lysine 646–phenylalanine 659 are compositionally biased toward basic and acidic residues.

It belongs to the PLPL family.

It is found in the membrane. Its function is as follows. Probable lipid hydrolase. This chain is Patatin-like phospholipase domain-containing protein AN0408, found in Emericella nidulans (strain FGSC A4 / ATCC 38163 / CBS 112.46 / NRRL 194 / M139) (Aspergillus nidulans).